Reading from the N-terminus, the 218-residue chain is Small ribosomal subunit protein uS3c (218 aa).

Residues 47–117 (VRTHIRNSSN…KLKITLSEID (71 aa)) enclose the KH type-2 domain.

This sequence belongs to the universal ribosomal protein uS3 family. In terms of assembly, part of the 30S ribosomal subunit.

The protein resides in the plastid. It is found in the chloroplast. The sequence is that of Small ribosomal subunit protein uS3c (rps3) from Spirogyra maxima (Green alga).